Reading from the N-terminus, the 341-residue chain is Probable GDP-mannose transporter 2 (341 aa).

Residues 1–11 (MSKHKHEWTES) are Cytoplasmic-facing. Residues 12–32 (VANSGPASILSYCASSILMTV) traverse the membrane as a helical segment. The Lumenal portion of the chain corresponds to 33 to 46 (TNKFVVNLDNFNMN). A helical membrane pass occupies residues 47–67 (FVMLFVQSLVCTVTLCILRIV). At 68–85 (GVANFRSLNRTDVKNWFP) the chain is on the cytoplasmic side. The helical transmembrane segment at 86–106 (ISLLLVLMIYTSLKSLQYLAV) threads the bilayer. Position 107 (Pro-107) is a topological domain, lumenal. A helical membrane pass occupies residues 108–128 (IYTIFKNLTIILIAYGEVLFF). Over 129–139 (GGKVTSMELTS) the chain is Cytoplasmic. A helical transmembrane segment spans residues 140–160 (FIMMVLSSVVATWGDQQAIAI). The Lumenal segment spans residues 161-176 (KASSLEDLDQELVEST). A helical membrane pass occupies residues 177–197 (IFVLNPGYLWMFTNCISSALF). Topologically, residues 198–214 (VLIMRKRIRLTNFKDYD) are cytoplasmic. The helical transmembrane segment at 215 to 235 (TMFYNNVLALPLLLVFSFIME) threads the bilayer. Topologically, residues 236-251 (DWSTKNLSVNLSADSL) are lumenal. Residues Asn-241 and Asn-245 are each glycosylated (N-linked (GlcNAc...) asparagine). Residues 252-272 (AAMVISGLMSVGISYCSGWCV) form a helical membrane-spanning segment. The Cytoplasmic segment spans residues 273-278 (RVTSST). Residues 279-299 (TYSMVGALNKLPIALAGLVFF) traverse the membrane as a helical segment. Residues 300 to 303 (DAPK) lie on the Lumenal side of the membrane. The helical transmembrane segment at 304-324 (NFLSFFSIFLGFLSGLLYAVA) threads the bilayer. Residues 325–341 (KQKKIQQQKVLAATLEK) lie on the Cytoplasmic side of the membrane.

This sequence belongs to the TPT transporter family. SLC35D subfamily.

It localises to the golgi apparatus membrane. The protein localises to the cytoplasmic vesicle membrane. It is found in the endoplasmic reticulum membrane. Involved in the import of GDP-mannose from the cytoplasm into the Golgi lumen. The chain is Probable GDP-mannose transporter 2 (HVG1) from Saccharomyces cerevisiae (strain Lalvin EC1118 / Prise de mousse) (Baker's yeast).